A 247-amino-acid chain; its full sequence is MPRYRLTVEYDGSDYVGWQRQDNGPSVQGAIEKAVLSLTRETVSIRGAGRTDSGVHARGQVAHLDLTREWKSYTLQNALNAHLALAGERVSILDVAEAPGDFDARFSAIRRHYLYRIISRRSPLALEARRAWWVPKPLDHDAMHEAAQRLVGHHDFTTFRSAHCQATSPLRTLDRLDVTRAGELIEIRATAQSFLHNQIRSFAGSLKLVGEGKWTPDDLQAALEARDRKACGPVAPPDGLYFMRVDY.

Asp52 (nucleophile) is an active-site residue. Position 113 (Tyr113) interacts with substrate.

The protein belongs to the tRNA pseudouridine synthase TruA family. In terms of assembly, homodimer.

The enzyme catalyses uridine(38/39/40) in tRNA = pseudouridine(38/39/40) in tRNA. Its function is as follows. Formation of pseudouridine at positions 38, 39 and 40 in the anticodon stem and loop of transfer RNAs. In Rhizobium meliloti (strain 1021) (Ensifer meliloti), this protein is tRNA pseudouridine synthase A.